The primary structure comprises 564 residues: Sulfite reductase [NADPH] hemoprotein beta-component 2 (564 aa).

[4Fe-4S] cluster contacts are provided by Cys-426, Cys-432, Cys-471, and Cys-475. Cys-475 provides a ligand contact to siroheme.

Belongs to the nitrite and sulfite reductase 4Fe-4S domain family. In terms of assembly, alpha(8)-beta(8). The alpha component is a flavoprotein, the beta component is a hemoprotein. Siroheme serves as cofactor. The cofactor is [4Fe-4S] cluster.

It carries out the reaction hydrogen sulfide + 3 NADP(+) + 3 H2O = sulfite + 3 NADPH + 4 H(+). It participates in sulfur metabolism; hydrogen sulfide biosynthesis; hydrogen sulfide from sulfite (NADPH route): step 1/1. Component of the sulfite reductase complex that catalyzes the 6-electron reduction of sulfite to sulfide. This is one of several activities required for the biosynthesis of L-cysteine from sulfate. In Klebsiella pneumoniae (strain 342), this protein is Sulfite reductase [NADPH] hemoprotein beta-component 2.